The sequence spans 61 residues: Small ribosomal subunit protein uS14 (61 aa).

Zn(2+)-binding residues include Cys-24, Cys-27, Cys-40, and Cys-43.

It belongs to the universal ribosomal protein uS14 family. Zinc-binding uS14 subfamily. In terms of assembly, part of the 30S ribosomal subunit. Contacts proteins S3 and S10. It depends on Zn(2+) as a cofactor.

Its function is as follows. Binds 16S rRNA, required for the assembly of 30S particles and may also be responsible for determining the conformation of the 16S rRNA at the A site. This chain is Small ribosomal subunit protein uS14, found in Mycoplasma genitalium (strain ATCC 33530 / DSM 19775 / NCTC 10195 / G37) (Mycoplasmoides genitalium).